The chain runs to 723 residues: PX domain-containing protein EREL1 (723 aa).

Positions 1–12 are enriched in basic residues; sequence MMQRRSPPKHRH. Residues 1-26 form a disordered region; that stretch reads MMQRRSPPKHRHDGTSPLPLGMDWSP. The PX domain occupies 48–165; the sequence is YCVTIPSWIV…SFLELEAAAR (118 aa). Disordered regions lie at residues 169–193 and 209–230; these read QDVD…MVHP and YGSD…QDDI. Over residues 172–193 the composition is skewed to low complexity; sequence DQNASDSNNDRSSTSSSPMVHP. A compositionally biased stretch (polar residues) spans 209-225; it reads YGSDTAYETSEVGSPSV. Coiled-coil stretches lie at residues 401–474 and 503–555; these read NERL…LRQK and KHVL…LEKE. A disordered region spans residues 698 to 723; sequence DVKTTEDVNEENSDEKDEASRETLKR. Acidic residues predominate over residues 704–714; the sequence is DVNEENSDEKD.

The protein localises to the cytoplasm. The protein resides in the cytosol. It is found in the endosome membrane. Its function is as follows. Acts as an effector of RABF2A and RABF2B. Involved in vacuolar transport of storage proteins. Regulates membrane trafficking to protein storage vacuoles (PSVs). Binds specifically to phosphatidylinositol 3-monophosphate (PtdIns3P). This is PX domain-containing protein EREL1 from Arabidopsis thaliana (Mouse-ear cress).